Here is an 837-residue protein sequence, read N- to C-terminus: Tuftelin-interacting protein 11 (837 aa).

2 stretches are compositionally biased toward basic and acidic residues: residues 1–13 (MSLS…GEGR) and 50–64 (TYGV…DERP). Disordered stretches follow at residues 1-21 (MSLS…DDER) and 50-136 (TYGV…AGGT). Residues 1-50 (MSLSHLYRDGEGRVDDDDDERENFEITDWDLQNEFNPNRQRHWQTKEEAT) are required for interaction with DHX15. Phosphoserine occurs at positions 2, 59, and 98. The span at 91 to 102 (EEAELDDSEDEE) shows a compositional bias: acidic residues. A compositionally biased stretch (basic and acidic residues) spans 103 to 116 (KPGKQEELPKDLGP). Ser144 carries the phosphoserine modification. A G-patch domain is found at 149 to 195 (TKGIGQKLLQKMGYVPGRGLGKNAQGIINPIEAKQRKGKGAVGAYGS). Residues 183 to 236 (QRKGKGAVGAYGSERTTQSLQDFPVVDSEEEAEEEFQKELSQWRKDPSGSKKKP) form a disordered region. Phosphoserine is present on Ser210. The span at 217-231 (EFQKELSQWRKDPSG) shows a compositional bias: basic and acidic residues. The Nuclear localization signal motif lies at 700–705 (VKDKFN). Positions 710 to 734 (IMNRAVSSNVGAYMQPGARENIAYL) are required for nuclear speckle localization.

The protein belongs to the TFP11/STIP family. In terms of assembly, identified in the spliceosome C complex. Found in the Intron Large (IL) complex, a post-mRNA release spliceosomal complex containing the excised intron, U2, U5 and U6 snRNPs, and splicing factors. Interacts with TUFT1. Interacts with DHX15; indicative for a recruitment of DHX15 to the IL complex. Interacts with GCFC2.

The protein resides in the cytoplasm. It localises to the nucleus. Involved in pre-mRNA splicing, specifically in spliceosome disassembly during late-stage splicing events. Intron turnover seems to proceed through reactions in two lariat-intron associated complexes termed Intron Large (IL) and Intron Small (IS). In cooperation with DHX15 seems to mediate the transition of the U2, U5 and U6 snRNP-containing IL complex to the snRNP-free IS complex leading to efficient debranching and turnover of excised introns. May play a role in the differentiation of ameloblasts and odontoblasts or in the forming of the enamel extracellular matrix. This chain is Tuftelin-interacting protein 11 (TFIP11), found in Oryctolagus cuniculus (Rabbit).